The following is a 707-amino-acid chain: Choline transporter-like protein 4 (707 aa).

At 1–27 (MASEEYGEPAKHDPSFKGPIKKRGCTD) the chain is on the cytoplasmic side. A helical transmembrane segment spans residues 28 to 48 (IICCVLFMVFLLGYMVVGILA). Residues 49 to 225 (WLYGDPRQVI…KIFEDFAKSW (177 aa)) lie on the Extracellular side of the membrane. Asn62, Asn140, Asn176, Asn191, and Asn196 each carry an N-linked (GlcNAc...) asparagine glycan. The chain crosses the membrane as a helical span at residues 226–246 (PWIITALVIAMVVSLLFLILL). Topologically, residues 247–249 (RFT) are cytoplasmic. Residues 250–270 (AGILVWVLIVGVIGVIGYGIY) form a helical membrane-spanning segment. Topologically, residues 271–305 (HCYMEYDTLNKQGVSVSDVGFTFNLGVYFRVKETW) are extracellular. A helical transmembrane segment spans residues 306 to 326 (LAILIVLAVVEAILLLVLLFL). Over 327–354 (RKRILIAIALIKEASKAIGHIMSSLFYP) the chain is Cytoplasmic. Residues 355-375 (LVTFVLLVVCVAYWGMTALYL) traverse the membrane as a helical segment. The Extracellular portion of the chain corresponds to 376-442 (ATSGAPIYRI…TNLFNLQIYN (67 aa)). N-linked (GlcNAc...) asparagine glycosylation is found at Asn389, Asn397, and Asn401. The chain crosses the membrane as a helical span at residues 443–463 (VIGFLWCINFVIALGQCVLAG). The Cytoplasmic segment spans residues 464-494 (AFASYYWAFHKPKDIPFFPVAESFMRTLRYH). The helical transmembrane segment at 495–515 (TGSLAFGSLILTIVQLIRIIL) threads the bilayer. Residues 516–556 (EYVDHKLKGAQNPCTRFLLCCLKCCFWCLEKFIKFLNRNAY) are Extracellular-facing. Residues 557-577 (IMIAVYGKNFCVSAKNAFKLL) traverse the membrane as a helical segment. At 578–593 (MRNIVRVVVLDKVTDL) the chain is on the cytoplasmic side. The chain crosses the membrane as a helical span at residues 594–614 (LIFFGKLIVVGGVGVLAFFFF). Residues 615–633 (SGRIPIPNDSFKSPTLNYY) lie on the Extracellular side of the membrane. An N-linked (GlcNAc...) asparagine glycan is attached at Asn622. Residues 634-654 (WIPIITVVLGSYMIAHGFFSV) traverse the membrane as a helical segment. At 655-707 (YNMCVDTLFLCFLEDLERNDGSQEKPYYMSKSLMSILNKKNRPPKSEEKKKKK) the chain is on the cytoplasmic side.

It belongs to the CTL (choline transporter-like) family.

It localises to the membrane. The protein localises to the apical cell membrane. The catalysed reaction is choline(out) + n H(+)(in) = choline(in) + n H(+)(out). It carries out the reaction thiamine diphosphate(out) = thiamine diphosphate(in). Choline transporter that seems to play a role in the choline-acetylcholine system and is required to the efferent innervation of hair cells in the olivocochlear bundle for the maintenance of physiological function of outer hair cells and the protection of hair cells from acoustic injury. Also described as a thiamine pyrophosphate transporter. Functionally, also described as a thiamine pyrophosphate transporter. In Xenopus laevis (African clawed frog), this protein is Choline transporter-like protein 4 (slc44a4).